The primary structure comprises 228 residues: Lipoprotein-releasing system ATP-binding protein LolD (228 aa).

The ABC transporter domain occupies 6–228 (IKCLNVVKGY…EAGVLNKQGQ (223 aa)). 42-49 (GASGSGKS) lines the ATP pocket.

The protein belongs to the ABC transporter superfamily. Lipoprotein translocase (TC 3.A.1.125) family. In terms of assembly, the complex is composed of two ATP-binding proteins (LolD) and two transmembrane proteins (LolC and LolE).

It localises to the cell inner membrane. In terms of biological role, part of the ABC transporter complex LolCDE involved in the translocation of mature outer membrane-directed lipoproteins, from the inner membrane to the periplasmic chaperone, LolA. Responsible for the formation of the LolA-lipoprotein complex in an ATP-dependent manner. In Saccharophagus degradans (strain 2-40 / ATCC 43961 / DSM 17024), this protein is Lipoprotein-releasing system ATP-binding protein LolD.